Consider the following 35-residue polypeptide: Photosystem II reaction center protein T (35 aa).

A helical transmembrane segment spans residues 3–23 (ALVYTFLLISTLGIIFFAIFF).

It belongs to the PsbT family. PSII is composed of 1 copy each of membrane proteins PsbA, PsbB, PsbC, PsbD, PsbE, PsbF, PsbH, PsbI, PsbJ, PsbK, PsbL, PsbM, PsbT, PsbY, PsbZ, Psb30/Ycf12, at least 3 peripheral proteins of the oxygen-evolving complex and a large number of cofactors. It forms dimeric complexes.

Its subcellular location is the plastid. It is found in the chloroplast thylakoid membrane. Its function is as follows. Found at the monomer-monomer interface of the photosystem II (PS II) dimer, plays a role in assembly and dimerization of PSII. PSII is a light-driven water plastoquinone oxidoreductase, using light energy to abstract electrons from H(2)O, generating a proton gradient subsequently used for ATP formation. The polypeptide is Photosystem II reaction center protein T (Aristolochia macrophylla (Dutchman's pipe vine)).